We begin with the raw amino-acid sequence, 284 residues long: MTAQLIDGKAIAASLRQQIAQRVAERRQQGLRAPGLAVILVGTDPASQVYVSHKRKDCEEVGFLSRAYDLPAETSQADLLALIDELNEDPTIDGILVQLPLPEHLDSSLLLERIRPDKDVDGFHPYNIGRLAQRMPLLRPCTPKGIMTLLESTGADLYGMHAVVVGASNIVGRPMAMELLLAGCTVTVTHRFTKDLAGHVGQADIVVVAAGKPGLVKGEWIKEGAIVIDVGINRQEDGKLVGDVVYETALPRAGWITPVPGGVGPMTRAGLLENTLHAAEHLHK.

Residues 166 to 168 (GAS) and I232 contribute to the NADP(+) site.

The protein belongs to the tetrahydrofolate dehydrogenase/cyclohydrolase family. Homodimer.

The enzyme catalyses (6R)-5,10-methylene-5,6,7,8-tetrahydrofolate + NADP(+) = (6R)-5,10-methenyltetrahydrofolate + NADPH. It catalyses the reaction (6R)-5,10-methenyltetrahydrofolate + H2O = (6R)-10-formyltetrahydrofolate + H(+). It participates in one-carbon metabolism; tetrahydrofolate interconversion. Catalyzes the oxidation of 5,10-methylenetetrahydrofolate to 5,10-methenyltetrahydrofolate and then the hydrolysis of 5,10-methenyltetrahydrofolate to 10-formyltetrahydrofolate. The polypeptide is Bifunctional protein FolD 1 (Ectopseudomonas mendocina (strain ymp) (Pseudomonas mendocina)).